Reading from the N-terminus, the 817-residue chain is Neurabin-2 (817 aa).

Actin-binding stretches follow at residues 1 to 154 and 164 to 283; these read MMKT…FERS and EAAA…QHRV. The disordered stretch occupies residues 1 to 165; sequence MMKTEPRGPG…PAAAGGDKEA (165 aa). 2 positions are modified to phosphoserine: serine 15 and serine 17. Positions 44–58 are enriched in basic residues; that stretch reads GAHHKKYGSNVHRIK. Phosphoserine is present on residues serine 94, serine 100, and serine 116. Residues 100–371 form an interaction with D(2) dopamine receptor region; the sequence is SLNENVDHSA…PERGVGNGRA (272 aa). The segment covering 131–141 has biased composition (pro residues); it reads SAQPAPPPHPP. An interaction with ADRA2A, ADRA2B and ADRA2C region spans residues 169–255; sequence RLLRQERAGL…KRSRVFQPPP (87 aa). Position 192 is a phosphoserine (serine 192). Residue threonine 193 is modified to Phosphothreonine. A Phosphoserine modification is found at serine 205. Threonine 207 is subject to Phosphothreonine. Residues 216–447 are disordered; sequence EKADSRTGLH…SEEEDPAPSR (232 aa). Pro residues predominate over residues 252 to 261; the sequence is QPPPPPPPAP. A compositionally biased stretch (basic and acidic residues) spans 291 to 302; the sequence is KPREVRKIKPVE. The span at 333-342 shows a compositional bias: low complexity; the sequence is STVATAASPA. The span at 344 to 356 shows a compositional bias: basic and acidic residues; it reads EEPKAQAAPEKEA. Acidic residues predominate over residues 410-425; that stretch reads LEEDDEDDEEDGEPPY. Positions 417-494 are interaction with protein phosphatase 1; the sequence is DEEDGEPPYE…LEKRVERLEL (78 aa). Serine 438 bears the Phosphoserine mark. Positions 447–451 match the PP1-binding motif motif; sequence RKIHF. The interaction with RGS2 stretch occupies residues 480–525; that stretch reads SAEYELEKRVERLELFPVELEKDSEGLGISIIGMGAGADMGLEKLG. One can recognise a PDZ domain in the interval 496-584; that stretch reads PVELEKDSEG…RVRFMIGRER (89 aa). The tract at residues 595 to 816 is interaction with TGN38; that stretch reads IQQTLEQERW…NLQTLRNSNS (222 aa). A Phosphoserine modification is found at serine 658. A coiled-coil region spans residues 671-788; the sequence is FKELQIKHAV…QRRVLEESEL (118 aa).

Interacts with DCLK2. Possibly exists as a homodimer, homotrimer or a homotetramer. Interacts with F-actin, PPP1CA, neurabin-1, TGN38 and D(2) dopamine receptor. Interacts with RGS1, RGS2, RGS4, RGS19 and ADRA1B, ADRA2A, ADRA2B, ADRA2C, CDKN2A, PPP1R2, RASGFR1 and TIAM1. Interacts (via C-terminus) with SPATA13 (via C-terminal tail). Interacts with ADRA2B. Stimulation of D1 (but not D2) dopamine receptors induces Ser-94 phosphorylation. Dephosphorylation of Ser-94 is mediated mainly by PP1 and to a lesser extent by PP2A. Phosphorylation of spinophilin disrupts its association with F-actin, but does not affect its binding to PP1.

The protein resides in the cytoplasm. It localises to the cytoskeleton. The protein localises to the nucleus. It is found in the cell projection. Its subcellular location is the dendritic spine. The protein resides in the postsynaptic density. It localises to the synapse. The protein localises to the cell junction. It is found in the adherens junction. Its subcellular location is the cell membrane. The protein resides in the lamellipodium. It localises to the filopodium. The protein localises to the ruffle membrane. Seems to act as a scaffold protein in multiple signaling pathways. Modulates excitatory synaptic transmission and dendritic spine morphology. Binds to actin filaments (F-actin) and shows cross-linking activity. Binds along the sides of the F-actin. May play an important role in linking the actin cytoskeleton to the plasma membrane at the synaptic junction. Believed to target protein phosphatase 1/PP1 to dendritic spines, which are rich in F-actin, and regulates its specificity toward ion channels and other substrates, such as AMPA-type and NMDA-type glutamate receptors. Plays a role in regulation of G-protein coupled receptor signaling, including dopamine D2 receptors and alpha-adrenergic receptors. May establish a signaling complex for dopaminergic neurotransmission through D2 receptors by linking receptors downstream signaling molecules and the actin cytoskeleton. Binds to ADRA1B and RGS2 and mediates regulation of ADRA1B signaling. May confer to Rac signaling specificity by binding to both, RacGEFs and Rac effector proteins. Probably regulates p70 S6 kinase activity by forming a complex with TIAM1. Required for hepatocyte growth factor (HGF)-induced cell migration. In Homo sapiens (Human), this protein is Neurabin-2 (PPP1R9B).